The sequence spans 336 residues: tRNA dimethylallyltransferase (336 aa).

ATP is bound at residue 19-26 (GPTASGKT). 21–26 (TASGKT) contacts substrate.

This sequence belongs to the IPP transferase family. As to quaternary structure, monomer. Mg(2+) is required as a cofactor.

The enzyme catalyses adenosine(37) in tRNA + dimethylallyl diphosphate = N(6)-dimethylallyladenosine(37) in tRNA + diphosphate. Catalyzes the transfer of a dimethylallyl group onto the adenine at position 37 in tRNAs that read codons beginning with uridine, leading to the formation of N6-(dimethylallyl)adenosine (i(6)A). This chain is tRNA dimethylallyltransferase, found in Bifidobacterium adolescentis (strain ATCC 15703 / DSM 20083 / NCTC 11814 / E194a).